The following is an 866-amino-acid chain: Putative linoleate 9S-lipoxygenase 3 (866 aa).

Residues 33-161 enclose the PLAT domain; it reads NDFGATVIDG…KYRYDRVFFA (129 aa). A Lipoxygenase domain is found at 164 to 866; sequence AYLPSQMPAA…AKGIPNSISI (703 aa). The segment at 206 to 250 is disordered; that stretch reads YNDLGSPDSGNPRPILGGSPDTPYPRRGRTGRKPTTTDPDSESRL. Positions 521, 526, 712, 716, and 866 each coordinate Fe cation.

It belongs to the lipoxygenase family. It depends on Fe cation as a cofactor.

The enzyme catalyses (9Z,12Z)-octadecadienoate + O2 = (9S)-hydroperoxy-(10E,12Z)-octadecadienoate. It participates in lipid metabolism; oxylipin biosynthesis. Functionally, plant lipoxygenase may be involved in a number of diverse aspects of plant physiology including growth and development, pest resistance, and senescence or responses to wounding. Catalyzes the hydroperoxidation of lipids containing a cis,cis-1,4-pentadiene structure. The chain is Putative linoleate 9S-lipoxygenase 3 from Oryza sativa subsp. japonica (Rice).